A 906-amino-acid polypeptide reads, in one-letter code: Interference hedgehog (906 aa).

The signal sequence occupies residues 1-20 (MSPLTSSLLLFSLLTSSLEA). Residues 21-715 (IPVLQPSFPP…SHNETVSMSP (695 aa)) are Extracellular-facing. 4 consecutive Ig-like C2-type domains span residues 39–144 (PGVR…TARL), 134–236 (PLVV…ISSS), 252–341 (PHLL…INVT), and 346–433 (PRIT…LQVN). Cysteine 62 and cysteine 128 are disulfide-bonded. 4 N-linked (GlcNAc...) asparagine glycosylation sites follow: asparagine 85, asparagine 104, asparagine 148, and asparagine 209. 2 disulfides stabilise this stretch: cysteine 173–cysteine 220 and cysteine 276–cysteine 324. Residues asparagine 339 and asparagine 388 are each glycosylated (N-linked (GlcNAc...) asparagine). Residues cysteine 367 and cysteine 415 are joined by a disulfide bond. Residues 427–439 (GTLLQVNPKQIQS) show a composition bias toward polar residues. The tract at residues 427 to 476 (GTLLQVNPKQIQSEPRETGSGGGFGSHRSMKPVNHGQKPTKMIPPSPPNV) is disordered. Fibronectin type-III domains follow at residues 470 to 578 (PPSP…LQPG) and 586 to 681 (VPEL…TQRP). Asparagine 475 carries N-linked (GlcNAc...) asparagine glycosylation. Residues arginine 506, lysine 512, lysine 514, and arginine 552 each contribute to the heparin site. An N-linked (GlcNAc...) asparagine glycan is attached at asparagine 568. Residues 673-713 (LKQGRTQRPRASTTEEPTIQGIGDRDTTSHNQPSHNETVSM) form a disordered region. Composition is skewed to polar residues over residues 676–689 (GRTQ…TEEP) and 701–713 (SHNQ…TVSM). A helical transmembrane segment spans residues 716-736 (MLTGTIGGGALLLILLVSAFL). The Cytoplasmic portion of the chain corresponds to 737 to 906 (CMCRRRSPRG…SSGSLNSVGV (170 aa)). The segment at 789 to 906 (AQQQQQQLDE…SSGSLNSVGV (118 aa)) is disordered. Low complexity-rich tracts occupy residues 854–866 (GNNN…SEAG) and 890–906 (SSRS…SVGV).

Belongs to the immunoglobulin superfamily. IHOG family. In terms of assembly, homodimer. Heterotetramer; 2 iHog chains bind 2 hh chains when facilitated by heparin, heparin is required to promote high-affinity interactions between hh and iHog.

Its subcellular location is the membrane. In terms of biological role, mediates response to the active Hedgehog (Hh) protein signal in embryos, functioning upstream or at the level of patched (ptc). The sequence is that of Interference hedgehog from Drosophila persimilis (Fruit fly).